Consider the following 593-residue polypeptide: DNA primase (593 aa).

The segment at 38-62 adopts a CHC2-type zinc-finger fold; the sequence is CPFHQEKTPSFTVSDSKRFFYCFGC. The 83-residue stretch at 250–332 folds into the Toprim domain; that stretch reads NRSILVEGYF…EKKISFIRLP (83 aa). Residues glutamate 256, aspartate 300, and aspartate 302 each coordinate Mg(2+).

The protein belongs to the DnaG primase family. In terms of assembly, monomer. Interacts with DnaB. The cofactor is Zn(2+). Requires Mg(2+) as cofactor.

It catalyses the reaction ssDNA + n NTP = ssDNA/pppN(pN)n-1 hybrid + (n-1) diphosphate.. Functionally, RNA polymerase that catalyzes the synthesis of short RNA molecules used as primers for DNA polymerase during DNA replication. In Rickettsia prowazekii (strain Madrid E), this protein is DNA primase.